The chain runs to 284 residues: MYVVSTKQMLNNAQRGGYAVPAFNIHNLETMQVVVETAANLHAPVIIAGTPGTFTHAGTENLLALVSAMAKQYHHPLAIHLDHHTKFDDIAQKVRSGVRSVMIDASHLPFAQNISRVKEVVDFCHRFDVSVEAELGQLGGQEDDVQVNEADALYTNPVQAREFAEATGIDSLAVAIGTAHGMYASAPVLDFSRLENIRQWVNLPLVLHGASGLSTKDIQQTIKLGICKINVATELKNAFSQALKNYLTEHPEATDPRDYLQSAKSAMRDVVSKVIADCGCEGRA.

The active-site Proton donor is the Asp-82. Positions 83 and 180 each coordinate Zn(2+). A dihydroxyacetone phosphate-binding site is contributed by Gly-181. Residue His-208 coordinates Zn(2+). Dihydroxyacetone phosphate is bound by residues 209–211 and 230–233; these read GAS and NVAT.

It belongs to the class II fructose-bisphosphate aldolase family. TagBP aldolase GatY subfamily. In terms of assembly, forms a complex with GatZ. Requires Zn(2+) as cofactor.

It carries out the reaction D-tagatofuranose 1,6-bisphosphate = D-glyceraldehyde 3-phosphate + dihydroxyacetone phosphate. The protein operates within carbohydrate metabolism; D-tagatose 6-phosphate degradation; D-glyceraldehyde 3-phosphate and glycerone phosphate from D-tagatose 6-phosphate: step 2/2. Catalytic subunit of the tagatose-1,6-bisphosphate aldolase GatYZ, which catalyzes the reversible aldol condensation of dihydroxyacetone phosphate (DHAP or glycerone-phosphate) with glyceraldehyde 3-phosphate (G3P) to produce tagatose 1,6-bisphosphate (TBP). Requires GatZ subunit for full activity and stability. Is involved in the catabolism of galactitol. The sequence is that of D-tagatose-1,6-bisphosphate aldolase subunit GatY from Escherichia coli O17:K52:H18 (strain UMN026 / ExPEC).